A 388-amino-acid polypeptide reads, in one-letter code: Chorismate synthase (388 aa).

The NADP(+) site is built by arginine 39 and arginine 45. Residues 130 to 132, 251 to 252, glycine 296, 311 to 315, and arginine 337 contribute to the FMN site; these read RSS, NA, and KPIPT.

This sequence belongs to the chorismate synthase family. Homotetramer. Requires FMNH2 as cofactor.

The catalysed reaction is 5-O-(1-carboxyvinyl)-3-phosphoshikimate = chorismate + phosphate. It functions in the pathway metabolic intermediate biosynthesis; chorismate biosynthesis; chorismate from D-erythrose 4-phosphate and phosphoenolpyruvate: step 7/7. Its function is as follows. Catalyzes the anti-1,4-elimination of the C-3 phosphate and the C-6 proR hydrogen from 5-enolpyruvylshikimate-3-phosphate (EPSP) to yield chorismate, which is the branch point compound that serves as the starting substrate for the three terminal pathways of aromatic amino acid biosynthesis. This reaction introduces a second double bond into the aromatic ring system. This is Chorismate synthase from Streptococcus pyogenes serotype M3 (strain SSI-1).